A 77-amino-acid polypeptide reads, in one-letter code: Secapin (77 aa).

Residues Met-1–Ala-32 form the signal peptide. A propeptide spanning residues Val-33–Arg-52 is cleaved from the precursor. Cys-61 and Cys-72 are joined by a disulfide.

This sequence belongs to the secapin family. In terms of tissue distribution, expressed by the venom gland.

It is found in the secreted. In terms of biological role, nontoxic peptide. The sequence is that of Secapin from Vespa magnifica (Hornet).